The following is a 164-amino-acid chain: C-phycoerythrin alpha chain (164 aa).

Cys82 and Cys139 together coordinate (2R,3E)-phycoerythrobilin.

Belongs to the phycobiliprotein family. As to quaternary structure, heterodimer of an alpha and a beta chain. Contains two covalently linked bilin chromophores.

Its subcellular location is the cellular thylakoid membrane. Light-harvesting photosynthetic bile pigment-protein from the phycobiliprotein complex. The sequence is that of C-phycoerythrin alpha chain (cpeA) from Pseudanabaena tenuis (strain PCC 7409).